We begin with the raw amino-acid sequence, 203 residues long: 8-oxoguanine DNA glycosylase/AP lyase (203 aa).

Active-site residues include lysine 128 and aspartate 146.

It belongs to the type-2 OGG1 family.

The catalysed reaction is 2'-deoxyribonucleotide-(2'-deoxyribose 5'-phosphate)-2'-deoxyribonucleotide-DNA = a 3'-end 2'-deoxyribonucleotide-(2,3-dehydro-2,3-deoxyribose 5'-phosphate)-DNA + a 5'-end 5'-phospho-2'-deoxyribonucleoside-DNA + H(+). Catalyzes the excision of an oxidatively damaged form of guanine (7,8-dihydro-8-oxoguanine = 8-oxoG) from DNA. Also cleaves the DNA backbone at apurinic/apyrimidinic sites (AP sites). The protein is 8-oxoguanine DNA glycosylase/AP lyase of Sulfolobus acidocaldarius (strain ATCC 33909 / DSM 639 / JCM 8929 / NBRC 15157 / NCIMB 11770).